The primary structure comprises 309 residues: MKILGIETSHDDTSIAILENNKVVALETISQVDIFKEFGGTIPEISSREHVKNINLILEILIKKHDLSTIDYVAYTKEPGLVGTLQIGYLFANAVSLAYNKPIIPINHLAGHFYSCAIDHEINYPSLCLLVSGGHTQLMLINNPNDFQIIGQTLDDAVGEAFDKVSSKLQLGFPGGPIIDKIYKNYNGEFIKFTEPHAPGEYNFSFSGLKSQVINYYHNKIQRNEAIDINQIAASFQDCAVSYLINQTKKALRKYNVKSLVLAGGVSANSELRKRFLEISNIAIIPDLKYATDNGAMIASCAYQMLKEK.

Positions 108 and 112 each coordinate Fe cation. Residues 130 to 134, Asp-163, Gly-176, Asp-180, and Asn-269 each bind substrate; that span reads LVSGG. Asp-293 contributes to the Fe cation binding site.

The protein belongs to the KAE1 / TsaD family. Requires Fe(2+) as cofactor.

The protein localises to the cytoplasm. It carries out the reaction L-threonylcarbamoyladenylate + adenosine(37) in tRNA = N(6)-L-threonylcarbamoyladenosine(37) in tRNA + AMP + H(+). Its function is as follows. Required for the formation of a threonylcarbamoyl group on adenosine at position 37 (t(6)A37) in tRNAs that read codons beginning with adenine. Is involved in the transfer of the threonylcarbamoyl moiety of threonylcarbamoyl-AMP (TC-AMP) to the N6 group of A37, together with TsaE and TsaB. TsaD likely plays a direct catalytic role in this reaction. The polypeptide is tRNA N6-adenosine threonylcarbamoyltransferase (Mycoplasmopsis agalactiae (strain NCTC 10123 / CIP 59.7 / PG2) (Mycoplasma agalactiae)).